The following is a 629-amino-acid chain: Polygalacturonase non-catalytic subunit AroGP2 (629 aa).

The signal sequence occupies residues 1–27 (MHNKILVSSYILLVLLFSLSSFNIVVA). Residues 28-109 (KDGDESGNPF…MCAPDLLPSL (82 aa)) constitute a propeptide that is removed on maturation. Asparagine 125, asparagine 143, asparagine 255, asparagine 277, asparagine 333, asparagine 368, and asparagine 386 each carry an N-linked (GlcNAc...) asparagine glycan. Over residues 267–293 (YGQNANGENQNFTSYSTNGNNPQNNFK) the composition is skewed to polar residues. The disordered stretch occupies residues 267 to 305 (YGQNANGENQNFTSYSTNGNNPQNNFKNYGVGGNGPSET). Residues 414–628 (FFREKMLKSG…FENDMTWATA (215 aa)) form the BURP domain.

In terms of assembly, interacts with polygalacturonase to form heterodimers.

The protein localises to the secreted. It localises to the extracellular space. The protein resides in the apoplast. It is found in the cell wall. Functionally, non-catalytic subunit of polygalacturonase. The polypeptide is Polygalacturonase non-catalytic subunit AroGP2 (GP2) (Solanum lycopersicum (Tomato)).